The following is a 386-amino-acid chain: Probable copper-dependent oxygenase M1 (386 aa).

The signal sequence occupies residues M1–A22. Residue N86 is glycosylated (N-linked (GlcNAc...) asparagine). The chain crosses the membrane as a helical span at residues F334–F354.

Belongs to the clz3 oxygenase family.

It is found in the membrane. Its pathway is secondary metabolite biosynthesis. In terms of biological role, probable copper-dependent oxygenase; part of the gene cluster that mediates the biosynthesis of squalestatin S1 (SQS1, also known as zaragozic acid A), a heavily oxidized fungal polyketide that offers potent cholesterol lowering activity by targeting squalene synthase (SS). SQS1 is composed of a 2,8-dioxobicyclic[3.2.1]octane-3,4,5-tricarboxyclic acid core that is connected to two lipophilic polyketide arms. These initial steps feature the priming of an unusual benzoic acid starter unit onto the highly reducing polyketide synthase pks2, followed by oxaloacetate extension and product release to generate a tricarboxylic acid containing product. The phenylalanine ammonia lyase (PAL) M7 and the acyl-CoA ligase M9 are involved in transforming phenylalanine into benzoyl-CoA. The citrate synthase-like protein R3 is involved in connecting the C-alpha-carbons of the hexaketide chain and oxaloacetate to afford the tricarboxylic acid unit. The potential hydrolytic enzymes, M8 and M10, are in close proximity to pks2 and may participate in product release. On the other side, the tetraketide arm is synthesized by a the squalestatin tetraketide synthase pks1 and enzymatically esterified to the core in the last biosynthetic step, by the acetyltransferase M4. The biosynthesis of the tetraketide must involve 3 rounds of chain extension. After the first and second rounds methyl-transfer occurs, and in all rounds of extension the ketoreductase and dehydratase are active. The enoyl reductase and C-MeT of pks1 are not active in the final round of extension. The acetyltransferase M4 appears to have a broad substrate selectivity for its acyl CoA substrate, allowing the in vitro synthesis of novel squalestatins. The biosynthesis of SQS1 requires several oxidative steps likely performed by oxidoreductases M1, R1 and R2. Finally, in support of the identification of the cluster as being responsible for SQS1 production, the cluster contains a gene encoding a putative squalene synthase (SS) R6, suggesting a likely mechanism for self-resistance. This Phoma sp. (strain ATCC 20986 / MF5453) protein is Probable copper-dependent oxygenase M1.